Here is a 121-residue protein sequence, read N- to C-terminus: Large ribosomal subunit protein bL20 (121 aa).

It belongs to the bacterial ribosomal protein bL20 family.

In terms of biological role, binds directly to 23S ribosomal RNA and is necessary for the in vitro assembly process of the 50S ribosomal subunit. It is not involved in the protein synthesizing functions of that subunit. This chain is Large ribosomal subunit protein bL20, found in Polynucleobacter necessarius subsp. necessarius (strain STIR1).